Here is a 248-residue protein sequence, read N- to C-terminus: Probable transcriptional regulatory protein RPE_4771 (248 aa).

The interval 1–21 is disordered; it reads MAGHSQFKNIMHRKGRQDAQK.

The protein belongs to the TACO1 family.

The protein resides in the cytoplasm. This is Probable transcriptional regulatory protein RPE_4771 from Rhodopseudomonas palustris (strain BisA53).